Here is a 481-residue protein sequence, read N- to C-terminus: 3-isopropylmalate dehydratase large subunit (481 aa).

3 residues coordinate [4Fe-4S] cluster: Cys-363, Cys-423, and Cys-426. The interval 432–459 is disordered; the sequence is DQLKPGERSASTSNRNFEGRQGPGGRTH.

It belongs to the aconitase/IPM isomerase family. LeuC type 1 subfamily. In terms of assembly, heterodimer of LeuC and LeuD. It depends on [4Fe-4S] cluster as a cofactor.

The enzyme catalyses (2R,3S)-3-isopropylmalate = (2S)-2-isopropylmalate. It participates in amino-acid biosynthesis; L-leucine biosynthesis; L-leucine from 3-methyl-2-oxobutanoate: step 2/4. Functionally, catalyzes the isomerization between 2-isopropylmalate and 3-isopropylmalate, via the formation of 2-isopropylmaleate. This Corynebacterium glutamicum (strain R) protein is 3-isopropylmalate dehydratase large subunit.